The sequence spans 135 residues: Ribonuclease P protein component (135 aa).

This sequence belongs to the RnpA family. Consists of a catalytic RNA component (M1 or rnpB) and a protein subunit.

It catalyses the reaction Endonucleolytic cleavage of RNA, removing 5'-extranucleotides from tRNA precursor.. Its function is as follows. RNaseP catalyzes the removal of the 5'-leader sequence from pre-tRNA to produce the mature 5'-terminus. It can also cleave other RNA substrates such as 4.5S RNA. The protein component plays an auxiliary but essential role in vivo by binding to the 5'-leader sequence and broadening the substrate specificity of the ribozyme. This Pseudomonas aeruginosa (strain ATCC 15692 / DSM 22644 / CIP 104116 / JCM 14847 / LMG 12228 / 1C / PRS 101 / PAO1) protein is Ribonuclease P protein component.